The chain runs to 2629 residues: Protein DOP1 homolog (2629 aa).

Disordered regions lie at residues 561–584, 605–652, 688–710, 1278–1340, 1371–1395, 1435–1471, and 1766–1785; these read NKGV…SRLN, SASN…TPRS, AGNV…PQFY, MDES…SSSA, TYRL…QTEH, ISKT…ATDS, and RQDT…SPTR. Polar residues-rich tracts occupy residues 605–615 and 636–647; these read SASNQSVGRQS and ASDTGQQSSSDL. The span at 1307 to 1320 shows a compositional bias: acidic residues; sequence DITDNSDSSDFESD. Basic and acidic residues predominate over residues 1321-1333; the sequence is SELRETSLEKEDS. Polar residues-rich tracts occupy residues 1381 to 1391 and 1435 to 1450; these read GENSLNSVATD and ISKT…SCSQ.

This sequence belongs to the DOP1 family.

It is found in the golgi apparatus membrane. May be involved in protein traffic between late Golgi and early endosomes. This Drosophila pseudoobscura pseudoobscura (Fruit fly) protein is Protein DOP1 homolog.